Here is a 161-residue protein sequence, read N- to C-terminus: Large ribosomal subunit protein uL10 (161 aa).

The protein belongs to the universal ribosomal protein uL10 family. Part of the ribosomal stalk of the 50S ribosomal subunit. The N-terminus interacts with L11 and the large rRNA to form the base of the stalk. The C-terminus forms an elongated spine to which L12 dimers bind in a sequential fashion forming a multimeric L10(L12)X complex.

Its function is as follows. Forms part of the ribosomal stalk, playing a central role in the interaction of the ribosome with GTP-bound translation factors. This chain is Large ribosomal subunit protein uL10, found in Sulfurovum sp. (strain NBC37-1).